The chain runs to 76 residues: Cytochrome c oxidase subunit 6C-1 (76 aa).

At 2 to 10 the chain is on the mitochondrial matrix side; it reads SLAKPAMRG. The helical transmembrane segment at 11 to 51 threads the bilayer; it reads LLGKRLRFHLPIAFTLSLVAALGFKYGVTEPRKQAYADFYK. Topologically, residues 52–76 are mitochondrial intermembrane; sequence QYDAVKDFNAMREAGIFESVRPSGE.

It belongs to the cytochrome c oxidase subunit 6c family. In terms of assembly, component of the cytochrome c oxidase (complex IV, CIV), a multisubunit enzyme composed of 14 subunits. The complex is composed of a catalytic core of 3 subunits MT-CO1, MT-CO2 and MT-CO3, encoded in the mitochondrial DNA, and 11 supernumerary subunits COX4I, COX5A, COX5B, COX6A, COX6B, COX6C, COX7A, COX7B, COX7C, COX8 and NDUFA4, which are encoded in the nuclear genome. The complex exists as a monomer or a dimer and forms supercomplexes (SCs) in the inner mitochondrial membrane with NADH-ubiquinone oxidoreductase (complex I, CI) and ubiquinol-cytochrome c oxidoreductase (cytochrome b-c1 complex, complex III, CIII), resulting in different assemblies (supercomplex SCI(1)III(2)IV(1) and megacomplex MCI(2)III(2)IV(2)).

It is found in the mitochondrion inner membrane. It participates in energy metabolism; oxidative phosphorylation. In terms of biological role, component of the cytochrome c oxidase, the last enzyme in the mitochondrial electron transport chain which drives oxidative phosphorylation. The respiratory chain contains 3 multisubunit complexes succinate dehydrogenase (complex II, CII), ubiquinol-cytochrome c oxidoreductase (cytochrome b-c1 complex, complex III, CIII) and cytochrome c oxidase (complex IV, CIV), that cooperate to transfer electrons derived from NADH and succinate to molecular oxygen, creating an electrochemical gradient over the inner membrane that drives transmembrane transport and the ATP synthase. Cytochrome c oxidase is the component of the respiratory chain that catalyzes the reduction of oxygen to water. Electrons originating from reduced cytochrome c in the intermembrane space (IMS) are transferred via the dinuclear copper A center (CU(A)) of subunit 2 and heme A of subunit 1 to the active site in subunit 1, a binuclear center (BNC) formed by heme A3 and copper B (CU(B)). The BNC reduces molecular oxygen to 2 water molecules using 4 electrons from cytochrome c in the IMS and 4 protons from the mitochondrial matrix. This is Cytochrome c oxidase subunit 6C-1 from Thunnus obesus (Bigeye tuna).